Consider the following 127-residue polypeptide: Sulfiredoxin (127 aa).

It belongs to the sulfiredoxin family. Mg(2+) serves as cofactor. Post-translationally, forms a transient disulfide bond with TSA1 during the reduction of cysteine sulfinic acid (-SO2H).

The protein resides in the cytoplasm. It is found in the nucleus. It carries out the reaction S-hydroxy-S-oxy-L-cysteinyl-[peroxiredoxin] + [protein]-dithiol + ATP = S-hydroxy-L-cysteinyl-[peroxiredoxin] + [protein]-disulfide + ADP + phosphate. Its function is as follows. Contributes to oxidative stress resistance by reducing cysteine-sulfinic acid formed under exposure to oxidants in the peroxiredoxin TSA1. May catalyze the reduction in a multi-step process by acting both as a specific phosphotransferase and as thioltransferase. The chain is Sulfiredoxin from Saccharomyces cerevisiae (strain ATCC 204508 / S288c) (Baker's yeast).